A 232-amino-acid chain; its full sequence is BTB/POZ domain-containing protein KCTD11 (232 aa).

Residues 1-49 (MLGAMFRAGTPMTPNLNPEGGGHYFIDRDGKAFRHILNFLRLGRLDLPL) enclose the BTB domain.

As to quaternary structure, homopentamer. Interacts with KCTD6 and KCTD21; KCTD11 and KCTD6 or KCTD21 may associate in pentameric assemblies. Component of the BCR(KCTD11) E3 ubiquitin ligase complex, at least composed of CUL3 and KCTD11 and RBX1. Interacts (via BTB domain) with CUL3; initially a 4:4 stoichiometry has been reported, however, electron microscopy revealed pentameric states of the BTB domain.

It functions in the pathway protein modification; protein ubiquitination. Its function is as follows. Plays a role as a marker and a regulator of neuronal differentiation; Up-regulated by a variety of neurogenic signals, such as retinoic acid, epidermal growth factor/EGF and NGFB/nerve growth factor. Induces apoptosis, growth arrest and the expression of cyclin-dependent kinase inhibitor CDKN1B. Plays a role as a tumor repressor and inhibits cell growth and tumorigenicity of medulloblastoma (MDB). Acts as a probable substrate-specific adapter for a BCR (BTB-CUL3-RBX1) E3 ubiquitin-protein ligase complex towards HDAC1. Functions as antagonist of the Hedgehog pathway on cell proliferation and differentiation by affecting the nuclear transfer of transcription factor GLI1, thus maintaining cerebellar granule cells in undifferentiated state, this effect probably occurs via HDAC1 down-regulation, keeping GLI1 acetylated and inactive. This chain is BTB/POZ domain-containing protein KCTD11 (KCTD11), found in Bos taurus (Bovine).